Reading from the N-terminus, the 616-residue chain is Dihydroxy-acid dehydratase (616 aa).

Mg(2+) is bound at residue Asp81. [2Fe-2S] cluster is bound at residue Cys122. The Mg(2+) site is built by Asp123 and Lys124. At Lys124 the chain carries N6-carboxylysine. Position 195 (Cys195) interacts with [2Fe-2S] cluster. Glu491 serves as a coordination point for Mg(2+). The active-site Proton acceptor is the Ser517.

This sequence belongs to the IlvD/Edd family. In terms of assembly, homodimer. Requires [2Fe-2S] cluster as cofactor. Mg(2+) serves as cofactor.

It carries out the reaction (2R)-2,3-dihydroxy-3-methylbutanoate = 3-methyl-2-oxobutanoate + H2O. It catalyses the reaction (2R,3R)-2,3-dihydroxy-3-methylpentanoate = (S)-3-methyl-2-oxopentanoate + H2O. It participates in amino-acid biosynthesis; L-isoleucine biosynthesis; L-isoleucine from 2-oxobutanoate: step 3/4. Its pathway is amino-acid biosynthesis; L-valine biosynthesis; L-valine from pyruvate: step 3/4. Functions in the biosynthesis of branched-chain amino acids. Catalyzes the dehydration of (2R,3R)-2,3-dihydroxy-3-methylpentanoate (2,3-dihydroxy-3-methylvalerate) into 2-oxo-3-methylpentanoate (2-oxo-3-methylvalerate) and of (2R)-2,3-dihydroxy-3-methylbutanoate (2,3-dihydroxyisovalerate) into 2-oxo-3-methylbutanoate (2-oxoisovalerate), the penultimate precursor to L-isoleucine and L-valine, respectively. The polypeptide is Dihydroxy-acid dehydratase (Escherichia coli O157:H7 (strain EC4115 / EHEC)).